The following is a 388-amino-acid chain: S-adenosylmethionine synthase (388 aa).

His17 contributes to the ATP binding site. Residue Asp19 participates in Mg(2+) binding. Glu45 is a K(+) binding site. The L-methionine site is built by Glu58 and Gln102. Residues 102 to 112 form a flexible loop region; that stretch reads QSVHIAQGVDA. ATP contacts are provided by residues 167-169, Asp241, 247-248, Ala264, and Lys268; these read DAK and RK. Asp241 lines the L-methionine pocket. An L-methionine-binding site is contributed by Lys272.

It belongs to the AdoMet synthase family. As to quaternary structure, homotetramer; dimer of dimers. The cofactor is Mg(2+). K(+) is required as a cofactor.

It localises to the cytoplasm. The catalysed reaction is L-methionine + ATP + H2O = S-adenosyl-L-methionine + phosphate + diphosphate. It functions in the pathway amino-acid biosynthesis; S-adenosyl-L-methionine biosynthesis; S-adenosyl-L-methionine from L-methionine: step 1/1. Catalyzes the formation of S-adenosylmethionine (AdoMet) from methionine and ATP. The overall synthetic reaction is composed of two sequential steps, AdoMet formation and the subsequent tripolyphosphate hydrolysis which occurs prior to release of AdoMet from the enzyme. The chain is S-adenosylmethionine synthase from Maricaulis maris (strain MCS10) (Caulobacter maris).